The following is a 202-amino-acid chain: Inner membrane-spanning protein YciB (202 aa).

The next 6 membrane-spanning stretches (helical) occupy residues 3–23 (FFLD…AGAA), 46–66 (ILIA…IVWL), 74–94 (MLWV…VFHN), 100–120 (WKPT…ALLF), 145–165 (LAWI…AYGY), and 173–193 (FKLF…GFYL).

This sequence belongs to the YciB family.

It localises to the cell inner membrane. Its function is as follows. Plays a role in cell envelope biogenesis, maintenance of cell envelope integrity and membrane homeostasis. The polypeptide is Inner membrane-spanning protein YciB (Azoarcus sp. (strain BH72)).